We begin with the raw amino-acid sequence, 122 residues long: UPF0102 protein Krad_1407 (122 aa).

It belongs to the UPF0102 family.

The protein is UPF0102 protein Krad_1407 of Kineococcus radiotolerans (strain ATCC BAA-149 / DSM 14245 / SRS30216).